Consider the following 208-residue polypeptide: Ribosomal RNA large subunit methyltransferase E (208 aa).

Residues Gly62, Trp64, Asp82, Asp98, and Asp123 each coordinate S-adenosyl-L-methionine. Lys163 (proton acceptor) is an active-site residue.

It belongs to the class I-like SAM-binding methyltransferase superfamily. RNA methyltransferase RlmE family.

Its subcellular location is the cytoplasm. It catalyses the reaction uridine(2552) in 23S rRNA + S-adenosyl-L-methionine = 2'-O-methyluridine(2552) in 23S rRNA + S-adenosyl-L-homocysteine + H(+). In terms of biological role, specifically methylates the uridine in position 2552 of 23S rRNA at the 2'-O position of the ribose in the fully assembled 50S ribosomal subunit. This is Ribosomal RNA large subunit methyltransferase E from Glaesserella parasuis serovar 5 (strain SH0165) (Haemophilus parasuis).